Reading from the N-terminus, the 73-residue chain is Toxin Td3 (73 aa).

The first 7 residues, I1–C7, serve as a signal peptide directing secretion. The region spanning K8–G70 is the LCN-type CS-alpha/beta domain. Disulfide bonds link C18-C69, C22-C44, C30-C50, and C34-C52. K71 is subject to Lysine amide.

Belongs to the long (4 C-C) scorpion toxin superfamily. Sodium channel inhibitor family. Beta subfamily. In terms of tissue distribution, expressed by the venom gland.

It localises to the secreted. In terms of biological role, beta toxins bind voltage-independently at site-4 of sodium channels (Nav) and shift the voltage of activation toward more negative potentials thereby affecting sodium channel activation and promoting spontaneous and repetitive firing. This chain is Toxin Td3, found in Tityus discrepans (Venezuelan scorpion).